Reading from the N-terminus, the 311-residue chain is Beta-lactamase (311 aa).

The segment at residues 1 to 36 is a signal peptide (tat-type signal); sequence MRKPTSSLTRRSVLGAGLGLGGALALGSTTASAASA. Serine 86 (acyl-ester intermediate) is an active-site residue. 252–254 is a binding site for substrate; the sequence is KSG.

Belongs to the class-A beta-lactamase family. Predicted to be exported by the Tat system. The position of the signal peptide cleavage has not been experimentally proven.

The catalysed reaction is a beta-lactam + H2O = a substituted beta-amino acid. Functionally, hydrolyzes benzylpenicillin and cloxacillin (at 10% of the rate of benzylpenicillin). The polypeptide is Beta-lactamase (bla) (Streptomyces cellulosae).